We begin with the raw amino-acid sequence, 438 residues long: GTPase Der (438 aa).

2 EngA-type G domains span residues 4–168 (PVVA…PAGA) and 176–351 (VRIA…GEYR). GTP contacts are provided by residues 10 to 17 (GRPNVGKS), 57 to 61 (DTGGI), 120 to 123 (NKVD), 182 to 189 (GRPNVGKS), 229 to 233 (DTAGM), and 294 to 297 (NKWD). The KH-like domain maps to 352–436 (RQIPTSMLNR…PVRILFRRRE (85 aa)).

This sequence belongs to the TRAFAC class TrmE-Era-EngA-EngB-Septin-like GTPase superfamily. EngA (Der) GTPase family. As to quaternary structure, associates with the 50S ribosomal subunit.

GTPase that plays an essential role in the late steps of ribosome biogenesis. The chain is GTPase Der from Desulforudis audaxviator (strain MP104C).